A 412-amino-acid polypeptide reads, in one-letter code: Protein ALF (412 aa).

Disordered stretches follow at residues 1 to 47 (MDPE…PLPP) and 154 to 234 (GLSE…GISE). Positions 31–47 (PPQPPPPPLPPPQPLPP) are enriched in pro residues. Over residues 187-196 (MRQRRRKKVV) the composition is skewed to basic residues. The span at 206–221 (MEEDEDTEEGQEDNED) shows a compositional bias: acidic residues. 3 DNA-binding regions span residues 237 to 241 (REHPF), 306 to 313 (NKPKMRHY), and 377 to 380 (YVPT).

Belongs to the FLO/LFY family. As to expression, expressed in the floral meristem and also in the vegetative meristem.

The protein localises to the nucleus. Functionally, probable transcription factor required for the specification of floral meristem identity. The protein is Protein ALF (ALF) of Petunia hybrida (Petunia).